The primary structure comprises 144 residues: Large ribosomal subunit protein uL13 (144 aa).

Belongs to the universal ribosomal protein uL13 family. Part of the 50S ribosomal subunit.

Functionally, this protein is one of the early assembly proteins of the 50S ribosomal subunit, although it is not seen to bind rRNA by itself. It is important during the early stages of 50S assembly. The protein is Large ribosomal subunit protein uL13 of Nitratidesulfovibrio vulgaris (strain DSM 19637 / Miyazaki F) (Desulfovibrio vulgaris).